A 142-amino-acid chain; its full sequence is Myosin-2 essential light chain (142 aa).

2 EF-hand domains span residues 2–37 (DDLA…LGQN) and 75–110 (HTVE…LGER).

Myosin is a hexamer of 2 heavy chains and 4 light chains (two regulatory light chains and two essential light chains).

Its subcellular location is the cytoplasm. The protein resides in the cytoskeleton. In terms of biological role, required for cytokinesis and embryo elongation. May regulate myosin II complex formation and/or the association of myosin with actin. May be involved in the organization of mlc-4 and nmy-2 into bundles. This chain is Myosin-2 essential light chain, found in Caenorhabditis elegans.